Consider the following 134-residue polypeptide: uncharacterized protein (134 aa).

This is an uncharacterized protein from Methanocaldococcus jannaschii (strain ATCC 43067 / DSM 2661 / JAL-1 / JCM 10045 / NBRC 100440) (Methanococcus jannaschii).